Consider the following 492-residue polypeptide: N-succinylglutamate 5-semialdehyde dehydrogenase (492 aa).

Residue 220–225 (GSAGTG) coordinates NAD(+). Catalysis depends on residues Glu-243 and Cys-277.

The protein belongs to the aldehyde dehydrogenase family. AstD subfamily.

The catalysed reaction is N-succinyl-L-glutamate 5-semialdehyde + NAD(+) + H2O = N-succinyl-L-glutamate + NADH + 2 H(+). It functions in the pathway amino-acid degradation; L-arginine degradation via AST pathway; L-glutamate and succinate from L-arginine: step 4/5. Its function is as follows. Catalyzes the NAD-dependent reduction of succinylglutamate semialdehyde into succinylglutamate. In Cronobacter sakazakii (strain ATCC BAA-894) (Enterobacter sakazakii), this protein is N-succinylglutamate 5-semialdehyde dehydrogenase.